A 393-amino-acid chain; its full sequence is Prokineticin receptor 1 (393 aa).

Residues 1 to 62 (METTVGTLGE…TNSRTFFAAK (62 aa)) lie on the Extracellular side of the membrane. N11 carries an N-linked (GlcNAc...) asparagine glycan. The chain crosses the membrane as a helical span at residues 63–83 (IVIGMALVGIMLVCGIGNFIF). Residues 84 to 98 (ITALARYKKLRNLTN) are Cytoplasmic-facing. The helical transmembrane segment at 99–119 (LLIANLAISDFLVAIVCCPFE) threads the bilayer. Over 120–145 (MDYYVVRQLSWEHGHVLCASVNYLRT) the chain is Extracellular. Residues C137 and C217 are joined by a disulfide bond. The helical transmembrane segment at 146-166 (VSLYVSTNALLAIAIDRYLAI) threads the bilayer. Residues 167 to 179 (VHPLRPRMKCQTA) are Cytoplasmic-facing. A helical transmembrane segment spans residues 180–200 (AGLIFLVWSVSILIAIPAAYF). The Extracellular portion of the chain corresponds to 201–232 (TTETVLVIVESQEKIFCGQIWPVDQQFYYRSY). Residues 233 to 253 (FLLVFGLEFVGPVIAMTLCYA) form a helical membrane-spanning segment. The Cytoplasmic portion of the chain corresponds to 254 to 282 (RVSRELWFKAVPGFQTEQIRRRLRCRRRT). The helical transmembrane segment at 283 to 303 (VLGLVCVLSAYVLCWAPFYGF) threads the bilayer. The Extracellular segment spans residues 304-322 (TIVRDFFPSVFVKEKHYLT). A helical membrane pass occupies residues 323 to 343 (AFYVVECIAMSNSMINTLCFV). Residues 344–393 (TVRNNTSKYLKRILRLQWRASPSGSKASADLDLRTTGIPATEEVDCIRLK) are Cytoplasmic-facing.

It belongs to the G-protein coupled receptor 1 family. Widely expressed in peripheral tissues with the highest level in the spleen and moderate levels in the adipose tissues, thymus, lung, kidney, testis, uterus and small intestine.

It is found in the cell membrane. Its function is as follows. Receptor for prokineticin 1. Exclusively coupled to the G(q) subclass of heteromeric G proteins. Activation leads to mobilization of calcium, stimulation of phosphoinositide turnover and activation of p44/p42 mitogen-activated protein kinase. May play a role during early pregnancy. This Rattus norvegicus (Rat) protein is Prokineticin receptor 1 (Prokr1).